The sequence spans 1044 residues: Elongation factor 3 (1044 aa).

One copy of the HEAT 1 repeat lies at 5-42 (AQSIKVLGELFEKLSVATAENREATATEIASFLNGNII). Residues I42 and H44 each coordinate ADP. The HEAT 2 repeat unit spans residues 45 to 80 (DVPEEFFKNLTKAVKDKKTAAAALETIAHIANENNL). ADP is bound at residue S83. 6 HEAT repeats span residues 86-123 (PYIV…AIDP), 124-162 (VAIK…AAKT), 166-203 (LRMP…TVDN), 205-241 (DIER…EVTP), 242-279 (ATLS…LVED), and 285-323 (PFLE…VGNV). The ADP site is built by T392, H396, and E397. 2 ABC transporter domains span residues 426-641 (DEGE…YYEL) and 667-993 (VKVS…KKED). Positions 703, 922, 925, and 951 each coordinate ADP. Residues 975–1044 (GHNWVSGQGS…DAYVSSDDEF (70 aa)) form a disordered region. A compositionally biased stretch (basic and acidic residues) spans 987 to 999 (RLEKKEDEGDKFD). Basic residues predominate over residues 1009-1031 (NKKKKLSSAELRKKKKERMKKKK).

Belongs to the ABC transporter superfamily. ABCF family. EF3 subfamily. In terms of assembly, monomer.

The protein resides in the cytoplasm. The catalysed reaction is ATP + H2O = ADP + phosphate + H(+). The protein operates within protein biosynthesis; polypeptide chain elongation. Functionally, ribosome-dependent ATPase that functions in cytoplasmic translation elongation. Required for the ATP-dependent release of deacylated tRNA from the ribosomal E-site during protein biosynthesis. Stimulates the eEF1A-dependent binding of aminoacyl-tRNA to the ribosomal A-site, which has reduced affinity for tRNA as long as the E-site is occupied. Assists translation termination by stimulating the release of nascent protein from the ribosome by release factors. This is Elongation factor 3 (TEF3) from Eremothecium gossypii (strain ATCC 10895 / CBS 109.51 / FGSC 9923 / NRRL Y-1056) (Yeast).